A 444-amino-acid chain; its full sequence is Glutamyl-tRNA reductase (444 aa).

Substrate-binding positions include 41–44 (TCNR), serine 102, 107–109 (ERE), and glutamine 113. Cysteine 42 acts as the Nucleophile in catalysis. NADP(+) is bound at residue 181-186 (GTGSYA).

Belongs to the glutamyl-tRNA reductase family. Homodimer.

The enzyme catalyses (S)-4-amino-5-oxopentanoate + tRNA(Glu) + NADP(+) = L-glutamyl-tRNA(Glu) + NADPH + H(+). It participates in porphyrin-containing compound metabolism; protoporphyrin-IX biosynthesis; 5-aminolevulinate from L-glutamyl-tRNA(Glu): step 1/2. In terms of biological role, catalyzes the NADPH-dependent reduction of glutamyl-tRNA(Glu) to glutamate 1-semialdehyde (GSA). The protein is Glutamyl-tRNA reductase of Cutibacterium acnes (strain DSM 16379 / KPA171202) (Propionibacterium acnes).